The chain runs to 85 residues: Large ribosomal subunit protein bL27 (85 aa).

The protein belongs to the bacterial ribosomal protein bL27 family.

The polypeptide is Large ribosomal subunit protein bL27 (Stutzerimonas stutzeri (strain A1501) (Pseudomonas stutzeri)).